Consider the following 304-residue polypeptide: Probable WRKY transcription factor 29 (304 aa).

Disordered regions lie at residues 76-96 (LPEDSKPFRDDKKQRSHGCLL) and 185-236 (YTNE…IPSA). A compositionally biased stretch (basic and acidic residues) spans 78–88 (EDSKPFRDDKK). Residues 128-194 (KEENLLSDAW…YTNEHNHELP (67 aa)) constitute a DNA-binding region (WRKY). 2 stretches are compositionally biased toward polar residues: residues 196–213 (RRNSLAGSTRAKTSQPKP) and 225–236 (SSPTSNPMIPSA).

Belongs to the WRKY group II-e family.

It localises to the nucleus. Transcription factor involved in the expression of defense genes in innate immune response of plants. Interacts specifically with the W box (5'-(T)TGAC[CT]-3'), a frequently occurring elicitor-responsive cis-acting element. Activates WRKY 22, SIRK and its own promoters. In Arabidopsis thaliana (Mouse-ear cress), this protein is Probable WRKY transcription factor 29 (WRKY29).